The sequence spans 154 residues: Protein X (154 aa).

The tract at residues 68–117 (PCALRFTSARRMETTVNAHGNLPKVLHKRTLGLSAMSTTDLEAYFKDCVF) is mitochondrial targeting sequence.

This sequence belongs to the orthohepadnavirus protein X family. In terms of assembly, may form homodimer. May interact with host CEBPA, CFLAR, CREB1, DDB1, E4F1, HBXIP, HSPD1/HSP60, NFKBIA, POLR2E and SMAD4. Interacts with host SMC5-SMC6 complex and induces its degradation. Interacts with host TRPC4AP; leading to prevent ubiquitination of TRPC4AP. Interacts with host PLSCR1; this interaction promotes ubiquitination and degradation of HBx and impairs HBx-mediated cell proliferation. In terms of processing, a fraction may be phosphorylated in insect cells and HepG2 cells, a human hepatoblastoma cell line. Phosphorylated in vitro by host protein kinase C or mitogen-activated protein kinase. N-acetylated in insect cells.

It localises to the host cytoplasm. It is found in the host nucleus. Its subcellular location is the host mitochondrion. In terms of biological role, multifunctional protein that plays a role in silencing host antiviral defenses and promoting viral transcription. Does not seem to be essential for HBV infection. May be directly involved in development of cirrhosis and liver cancer (hepatocellular carcinoma). Most of cytosolic activities involve modulation of cytosolic calcium. The effect on apoptosis is controversial depending on the cell types in which the studies have been conducted. May induce apoptosis by localizing in mitochondria and causing loss of mitochondrial membrane potential. May also modulate apoptosis by binding host CFLAR, a key regulator of the death-inducing signaling complex (DISC). Promotes viral transcription by using the host E3 ubiquitin ligase DDB1 to target the SMC5-SMC6 complex to proteasomal degradation. This host complex would otherwise bind to viral episomal DNA, and prevents its transcription. Moderately stimulates transcription of many different viral and cellular transcription elements. Promoters and enhancers stimulated by HBx contain DNA binding sites for NF-kappa-B, AP-1, AP-2, c-EBP, ATF/CREB, or the calcium-activated factor NF-AT. The chain is Protein X from Hepatitis B virus genotype B/C subtype adw (isolate Okinawa/pODW282/1998) (HBV-B).